Reading from the N-terminus, the 131-residue chain is Small ribosomal subunit protein uS11 (131 aa).

Belongs to the universal ribosomal protein uS11 family. In terms of assembly, part of the 30S ribosomal subunit.

Functionally, located on the platform of the 30S subunit. In Haloquadratum walsbyi (strain DSM 16790 / HBSQ001), this protein is Small ribosomal subunit protein uS11.